Consider the following 543-residue polypeptide: Mannuronan C5-epimerase (543 aa).

The N-terminal stretch at 1 to 35 (MPDISLSIPRRRLPRLRPLAAAVLGAVLLHGQAWA) is a signal peptide. PbH1 repeat units follow at residues 243–270 (GAEVYLSNSTFTSFGYNASKAYGISISQ), 283–304 (RPKGWVIDSTIVDSWYGFYCYE), 305–327 (ADDLVVKGNTYRDNIVYGIDPHD), 329–352 (SHRLIIADNTVHGTRKKHGIIVSR), 354–376 (VNDSFIFNNRSYENKLSGIVLDR), 378–400 (SEGNLVAYNEVYRNHSDGITLYE), and 401–423 (SGDNLLWGNQVLANRRHGIRVRN). H326 functions as the Proton acceptor in the catalytic mechanism.

It belongs to the D-mannuronate C5-epimerase family.

The protein localises to the periplasm. It catalyses the reaction [(1-&gt;4)-beta-D-mannuronosyl](n) = [alginate](n). It participates in glycan biosynthesis; alginate biosynthesis. With respect to regulation, inhibited by the presence of acetyl groups on the substrate. Functionally, catalyzes the epimerization of beta-D-mannuronate to alpha-L-guluronate during the synthesis of the linear polysaccharide alginate. In addition, is part of a periplasmic protein complex that protects alginate from degradation by AlgL by channeling the newly formed alginate polymer through a scaffold that transfers the alginate polymer through the periplasmic space to the outer membrane secretin AlgE. The protein is Mannuronan C5-epimerase of Pseudomonas aeruginosa (strain ATCC 15692 / DSM 22644 / CIP 104116 / JCM 14847 / LMG 12228 / 1C / PRS 101 / PAO1).